The following is a 153-amino-acid chain: Ribonuclease H (153 aa).

The region spanning 4-145 is the RNase H type-1 domain; sequence SVDSVELFTD…ADQLANRGVD (142 aa). Aspartate 13, glutamate 51, aspartate 73, and aspartate 137 together coordinate Mg(2+).

It belongs to the RNase H family. Monomer. Mg(2+) is required as a cofactor.

Its subcellular location is the cytoplasm. It carries out the reaction Endonucleolytic cleavage to 5'-phosphomonoester.. Functionally, endonuclease that specifically degrades the RNA of RNA-DNA hybrids. This is Ribonuclease H from Pseudomonas fluorescens (strain Pf0-1).